The following is a 146-amino-acid chain: Putative serine protease inhibitor SAV_2156 (146 aa).

The signal sequence occupies residues 1-26 (MTKTTMAVPGALLAAIALLSAAPAQA). Intrachain disulfides connect cysteine 57/cysteine 70 and cysteine 90/cysteine 120.

It belongs to the protease inhibitor I16 (SSI) family.

Its subcellular location is the secreted. This Streptomyces avermitilis (strain ATCC 31267 / DSM 46492 / JCM 5070 / NBRC 14893 / NCIMB 12804 / NRRL 8165 / MA-4680) protein is Putative serine protease inhibitor SAV_2156.